A 72-amino-acid polypeptide reads, in one-letter code: DNA gyrase inhibitor YacG (72 aa).

4 residues coordinate Zn(2+): Cys17, Cys20, Cys32, and Cys36. The disordered stretch occupies residues 51–72 (IPGPEEEEMSYPPRSDDENRSR).

It belongs to the DNA gyrase inhibitor YacG family. Interacts with GyrB. Zn(2+) is required as a cofactor.

Its function is as follows. Inhibits all the catalytic activities of DNA gyrase by preventing its interaction with DNA. Acts by binding directly to the C-terminal domain of GyrB, which probably disrupts DNA binding by the gyrase. This is DNA gyrase inhibitor YacG from Methylorubrum extorquens (strain PA1) (Methylobacterium extorquens).